Here is a 262-residue protein sequence, read N- to C-terminus: Acyl-[acyl-carrier-protein]--UDP-N-acetylglucosamine O-acyltransferase (262 aa).

It belongs to the transferase hexapeptide repeat family. LpxA subfamily. In terms of assembly, homotrimer.

The protein resides in the cytoplasm. It carries out the reaction a (3R)-hydroxyacyl-[ACP] + UDP-N-acetyl-alpha-D-glucosamine = a UDP-3-O-[(3R)-3-hydroxyacyl]-N-acetyl-alpha-D-glucosamine + holo-[ACP]. It participates in glycolipid biosynthesis; lipid IV(A) biosynthesis; lipid IV(A) from (3R)-3-hydroxytetradecanoyl-[acyl-carrier-protein] and UDP-N-acetyl-alpha-D-glucosamine: step 1/6. Involved in the biosynthesis of lipid A, a phosphorylated glycolipid that anchors the lipopolysaccharide to the outer membrane of the cell. The protein is Acyl-[acyl-carrier-protein]--UDP-N-acetylglucosamine O-acyltransferase of Salmonella schwarzengrund (strain CVM19633).